The following is a 291-amino-acid chain: Urease accessory protein UreD (291 aa).

Belongs to the UreD family. As to quaternary structure, ureD, UreF and UreG form a complex that acts as a GTP-hydrolysis-dependent molecular chaperone, activating the urease apoprotein by helping to assemble the nickel containing metallocenter of UreC. The UreE protein probably delivers the nickel.

Its subcellular location is the cytoplasm. In terms of biological role, required for maturation of urease via the functional incorporation of the urease nickel metallocenter. The polypeptide is Urease accessory protein UreD (Polynucleobacter asymbioticus (strain DSM 18221 / CIP 109841 / QLW-P1DMWA-1) (Polynucleobacter necessarius subsp. asymbioticus)).